We begin with the raw amino-acid sequence, 282 residues long: Probable ribosomal RNA small subunit methyltransferase A (282 aa).

Positions 24, 26, 51, 72, 100, and 115 each coordinate S-adenosyl-L-methionine.

Belongs to the class I-like SAM-binding methyltransferase superfamily. rRNA adenine N(6)-methyltransferase family. RsmA subfamily.

The protein resides in the cytoplasm. Functionally, specifically dimethylates two adjacent adenosines in the loop of a conserved hairpin near the 3'-end of 16S rRNA in the 30S particle. May play a critical role in biogenesis of 30S subunits. The protein is Probable ribosomal RNA small subunit methyltransferase A of Halobacterium salinarum (strain ATCC 29341 / DSM 671 / R1).